We begin with the raw amino-acid sequence, 139 residues long: Acid shock protein (139 aa).

A signal peptide spans Met-1–Ala-21. A propeptide spanning residues Ala-22–Gln-80 is cleaved from the precursor. The span at Thr-27 to Lys-40 shows a compositional bias: low complexity. The disordered stretch occupies residues Thr-27–Ala-139. The span at Thr-41–Ala-51 shows a compositional bias: basic residues. Low complexity-rich tracts occupy residues Ala-52 to Gln-61 and Ala-90 to Gln-99. The segment covering Ala-118–Ala-130 has biased composition (basic residues).

It belongs to the Asr family. Proteolytic processing gives rise to the active protein.

It is found in the periplasm. In terms of biological role, required for growth and/or survival at acidic conditions. This Klebsiella pneumoniae protein is Acid shock protein (asr).